The following is a 353-amino-acid chain: Nicotinate-nucleotide--dimethylbenzimidazole phosphoribosyltransferase (353 aa).

The Proton acceptor role is filled by glutamate 320.

Belongs to the CobT family.

It catalyses the reaction 5,6-dimethylbenzimidazole + nicotinate beta-D-ribonucleotide = alpha-ribazole 5'-phosphate + nicotinate + H(+). It participates in nucleoside biosynthesis; alpha-ribazole biosynthesis; alpha-ribazole from 5,6-dimethylbenzimidazole: step 1/2. Catalyzes the synthesis of alpha-ribazole-5'-phosphate from nicotinate mononucleotide (NAMN) and 5,6-dimethylbenzimidazole (DMB). This chain is Nicotinate-nucleotide--dimethylbenzimidazole phosphoribosyltransferase, found in Syntrophotalea carbinolica (strain DSM 2380 / NBRC 103641 / GraBd1) (Pelobacter carbinolicus).